A 202-amino-acid chain; its full sequence is Probable GTP-binding protein EngB (202 aa).

In terms of domain architecture, EngB-type G spans Val-22 to Glu-197. GTP contacts are provided by residues Gly-30–Ser-37, Gly-57–Leu-61, Asp-75–Gly-78, Thr-142–Asp-145, and Tyr-173–Ser-178. Positions 37 and 59 each coordinate Mg(2+).

Belongs to the TRAFAC class TrmE-Era-EngA-EngB-Septin-like GTPase superfamily. EngB GTPase family. Mg(2+) serves as cofactor.

Functionally, necessary for normal cell division and for the maintenance of normal septation. The polypeptide is Probable GTP-binding protein EngB (Bacteroides thetaiotaomicron (strain ATCC 29148 / DSM 2079 / JCM 5827 / CCUG 10774 / NCTC 10582 / VPI-5482 / E50)).